The following is a 304-amino-acid chain: Glutaminase (304 aa).

Substrate contacts are provided by serine 63, asparagine 114, glutamate 158, asparagine 165, tyrosine 189, tyrosine 240, and valine 258.

It belongs to the glutaminase family. Homotetramer.

The catalysed reaction is L-glutamine + H2O = L-glutamate + NH4(+). The sequence is that of Glutaminase from Shewanella sp. (strain ANA-3).